A 196-amino-acid chain; its full sequence is ATP-dependent Clp protease proteolytic subunit (196 aa).

Catalysis depends on S101, which acts as the Nucleophile. H126 is an active-site residue.

Belongs to the peptidase S14 family. In terms of assembly, component of the chloroplastic Clp protease core complex.

It is found in the plastid. Its subcellular location is the chloroplast stroma. The enzyme catalyses Hydrolysis of proteins to small peptides in the presence of ATP and magnesium. alpha-casein is the usual test substrate. In the absence of ATP, only oligopeptides shorter than five residues are hydrolyzed (such as succinyl-Leu-Tyr-|-NHMec, and Leu-Tyr-Leu-|-Tyr-Trp, in which cleavage of the -Tyr-|-Leu- and -Tyr-|-Trp bonds also occurs).. Its function is as follows. Cleaves peptides in various proteins in a process that requires ATP hydrolysis. Has a chymotrypsin-like activity. Plays a major role in the degradation of misfolded proteins. The polypeptide is ATP-dependent Clp protease proteolytic subunit (Panax ginseng (Korean ginseng)).